We begin with the raw amino-acid sequence, 321 residues long: NADPH-dependent D-xylose reductase (321 aa).

Tyrosine 50 functions as the Proton donor in the catalytic mechanism. Histidine 112 serves as a coordination point for substrate. Residues serine 167 to asparagine 168, serine 216 to glutamate 225, and lysine 272 to asparagine 282 each bind NADP(+).

Belongs to the aldo/keto reductase family.

It carries out the reaction xylitol + NAD(+) = D-xylose + NADH + H(+). It catalyses the reaction xylitol + NADP(+) = D-xylose + NADPH + H(+). It participates in carbohydrate metabolism; D-xylose degradation. In terms of biological role, reduces D-xylose into xylitol. Preferentially utilizes NADPH as a cosubstrate. This Candida boidinii (Yeast) protein is NADPH-dependent D-xylose reductase (XYL1).